A 690-amino-acid polypeptide reads, in one-letter code: Elongation factor G (690 aa).

The tr-type G domain maps to 8-283 (ERYRNFGIMA…AVVDFMPSPL (276 aa)). Residues 17-24 (AHIDAGKT), 81-85 (DTPGH), and 135-138 (NKLD) each bind GTP.

This sequence belongs to the TRAFAC class translation factor GTPase superfamily. Classic translation factor GTPase family. EF-G/EF-2 subfamily.

The protein localises to the cytoplasm. Functionally, catalyzes the GTP-dependent ribosomal translocation step during translation elongation. During this step, the ribosome changes from the pre-translocational (PRE) to the post-translocational (POST) state as the newly formed A-site-bound peptidyl-tRNA and P-site-bound deacylated tRNA move to the P and E sites, respectively. Catalyzes the coordinated movement of the two tRNA molecules, the mRNA and conformational changes in the ribosome. The polypeptide is Elongation factor G (Novosphingobium aromaticivorans (strain ATCC 700278 / DSM 12444 / CCUG 56034 / CIP 105152 / NBRC 16084 / F199)).